Consider the following 164-residue polypeptide: Ribosome maturation factor RimP (164 aa).

The protein belongs to the RimP family.

The protein localises to the cytoplasm. Required for maturation of 30S ribosomal subunits. This Thermodesulfovibrio yellowstonii (strain ATCC 51303 / DSM 11347 / YP87) protein is Ribosome maturation factor RimP.